The sequence spans 424 residues: Serine--tRNA ligase (424 aa).

230-232 (TAE) provides a ligand contact to L-serine. 261 to 263 (RSE) is an ATP binding site. Glu-284 contacts L-serine. Residue 348–351 (EISS) participates in ATP binding. Ser-384 provides a ligand contact to L-serine.

It belongs to the class-II aminoacyl-tRNA synthetase family. Type-1 seryl-tRNA synthetase subfamily. Homodimer. The tRNA molecule binds across the dimer.

Its subcellular location is the cytoplasm. The catalysed reaction is tRNA(Ser) + L-serine + ATP = L-seryl-tRNA(Ser) + AMP + diphosphate + H(+). It carries out the reaction tRNA(Sec) + L-serine + ATP = L-seryl-tRNA(Sec) + AMP + diphosphate + H(+). It participates in aminoacyl-tRNA biosynthesis; selenocysteinyl-tRNA(Sec) biosynthesis; L-seryl-tRNA(Sec) from L-serine and tRNA(Sec): step 1/1. Catalyzes the attachment of serine to tRNA(Ser). Is also able to aminoacylate tRNA(Sec) with serine, to form the misacylated tRNA L-seryl-tRNA(Sec), which will be further converted into selenocysteinyl-tRNA(Sec). This is Serine--tRNA ligase from Streptococcus pneumoniae (strain JJA).